Here is a 442-residue protein sequence, read N- to C-terminus: MELQKKFTALAQSQVELEVVVAREDAQRHYQRFVEEYLERARLPGFRKGKVPLAVLERKYGSAIRQDAAAALMEKALEEGFAQASQDSQPLPISRPSLKKKPVFDPDEDFSFAVIYDVFPSVELRNTSGFSLSVPTVSVTEEDVSRELTRIQERNALVTDKGADSCAEVGDIATVDYHEVDDSGAVRPGTERAGVVFTLGVEEGPFALGQDILGMKLGQRCLFAKRAGMLKDEAAQVRVTLKALKQRQLPSLDDELAQDVSDAFRTLDDLTRSVRQNLAEALEAALHEYKRRQLLRILVRENPFSLPESLVVGEMESRWALVMRQFGVSLSGTPQNKLQFFQQWRPEVEEHLKQRVIVELLLKQEQVSVSAEEIETEYVRIASKTGSKEERVREYYAGEEKRRALCEGIRERKLCQKLLGRCVTECGPEQSLTDFLQEQSRA.

The region spanning 170-250 is the PPIase FKBP-type domain; that stretch reads GDIATVDYHE…LKALKQRQLP (81 aa).

The protein belongs to the FKBP-type PPIase family. Tig subfamily.

Its subcellular location is the cytoplasm. The catalysed reaction is [protein]-peptidylproline (omega=180) = [protein]-peptidylproline (omega=0). Involved in protein export. Acts as a chaperone by maintaining the newly synthesized protein in an open conformation. Functions as a peptidyl-prolyl cis-trans isomerase. The protein is Trigger factor (tig) of Treponema pallidum (strain Nichols).